The primary structure comprises 406 residues: MKAVIFVVDGLGDRPDKNGNTPLKEAKTPVMDRMAKEGICGLMNSVDIGVRPGSDTAHLALLGYDPYTTYTGRGPFEACGVGVTVKPGDIAFRCNFSSVDENFIVTDRRAGRIENTSELEKELDGLKIDDVEIIFKESGGYRAALVLRGPGLSDKITDADPKKEGKKVKEIHPLDDSKEAKKTAEIVNKLLKIAYEKLDKHPVNEERRKQNLPVANMIVPRGVGQVPEIMQFTEKTGLKGACIAGTGLIKGIAKMVGLDVIDVEGCDGTPDSDFMAKACAIVETLENYDFILVNVKGADEAGHDGNYELKKQVIEKVDEMLDYITKNISKDEVYFVLSGDHSTPIEEMDHSADPLPVVLWGKSVRVDDVEKFDEFSTYKGGLNWIKGVHIMPILLDLMGLAKKYGA.

Belongs to the BPG-independent phosphoglycerate mutase family. A-PGAM subfamily.

The enzyme catalyses (2R)-2-phosphoglycerate = (2R)-3-phosphoglycerate. The protein operates within carbohydrate degradation; glycolysis; pyruvate from D-glyceraldehyde 3-phosphate: step 3/5. Catalyzes the interconversion of 2-phosphoglycerate and 3-phosphoglycerate. The protein is 2,3-bisphosphoglycerate-independent phosphoglycerate mutase of Methanococcus maripaludis (strain DSM 14266 / JCM 13030 / NBRC 101832 / S2 / LL).